Consider the following 385-residue polypeptide: Deoxyhypusine synthase (385 aa).

Residues 108 to 112, 134 to 136, E140, and D257 each bind NAD(+); these read SNLIS and TAG. 139 to 140 is a binding site for spermidine; it reads EE. Residue D262 participates in spermidine binding. Residue G304 participates in NAD(+) binding. H309 lines the spermidine pocket. 329–330 provides a ligand contact to NAD(+); that stretch reads TG. Spermidine-binding positions include 335 to 337 and 344 to 350; these read GSD and EAVSWGK. K350 acts as the Nucleophile in catalysis. 363–364 is an NAD(+) binding site; the sequence is DV.

The protein belongs to the deoxyhypusine synthase family. Requires NAD(+) as cofactor.

The catalysed reaction is [eIF5A protein]-L-lysine + spermidine = [eIF5A protein]-deoxyhypusine + propane-1,3-diamine. It functions in the pathway protein modification; eIF5A hypusination. Catalyzes the NAD-dependent oxidative cleavage of spermidine and the subsequent transfer of the butylamine moiety of spermidine to the epsilon-amino group of a specific lysine residue of the eIF-5A precursor protein to form the intermediate deoxyhypusine residue. This is Deoxyhypusine synthase (DYS1) from Candida glabrata (strain ATCC 2001 / BCRC 20586 / JCM 3761 / NBRC 0622 / NRRL Y-65 / CBS 138) (Yeast).